The primary structure comprises 407 residues: MILTQLPAEFQAAKPIIETIEAAGYEAYFVGGCVRDTILGKPLHDVDIATSAFPAEVKQLFKRTVDTGIEHGTVMILDHGNGYETTTFRTESGYQDFRRPDQVTFVRSLKEDLKRRDFTINALAMTANGEVIDLFDGLADMEQGILRAVGVAEERFHEDALRMMRAVRFASQLGFTIESQTEQAIADNAALLAKIAVERTRVEWEKLLMGQHPVAGLTGLLTTDLYRYMPAMADQEAMLRQLMALPAWHLPSIESTWTLLSWTMQRTDEAAVRQLLKTWKTSNELINHVTAAIKALMALKHNGQLTAQENFYTGLEALKTANQVATILGFGQDQAQLVQSYASLPIHDKHELAINGGDLLKAKLVTPGPMMGQILAACLQAVVMKQVPNQQDALLDFARMVADSKNH.

2 residues coordinate ATP: G32 and R35. 2 residues coordinate CTP: G32 and R35. Mg(2+) contacts are provided by D45 and D47. Positions 116, 159, 162, 165, and 168 each coordinate ATP. 5 residues coordinate CTP: R116, D159, R162, R165, and R168.

It belongs to the tRNA nucleotidyltransferase/poly(A) polymerase family. Bacterial CCA-adding enzyme type 3 subfamily. Homodimer. Mg(2+) is required as a cofactor.

The enzyme catalyses a tRNA precursor + 2 CTP + ATP = a tRNA with a 3' CCA end + 3 diphosphate. It carries out the reaction a tRNA with a 3' CCA end + 2 CTP + ATP = a tRNA with a 3' CCACCA end + 3 diphosphate. Functionally, catalyzes the addition and repair of the essential 3'-terminal CCA sequence in tRNAs without using a nucleic acid template. Adds these three nucleotides in the order of C, C, and A to the tRNA nucleotide-73, using CTP and ATP as substrates and producing inorganic pyrophosphate. tRNA 3'-terminal CCA addition is required both for tRNA processing and repair. Also involved in tRNA surveillance by mediating tandem CCA addition to generate a CCACCA at the 3' terminus of unstable tRNAs. While stable tRNAs receive only 3'-terminal CCA, unstable tRNAs are marked with CCACCA and rapidly degraded. This chain is CCA-adding enzyme, found in Lactiplantibacillus plantarum (strain ATCC BAA-793 / NCIMB 8826 / WCFS1) (Lactobacillus plantarum).